We begin with the raw amino-acid sequence, 425 residues long: Bifunctional phosphoribosylaminoimidazole carboxylase/phosphoribosylaminoimidazole succinocarboxamide synthetase (425 aa).

The residue at position 2 (A2) is an N-acetylalanine. Positions 2–260 are SAICAR synthetase domain; sequence ATAEVLNIGK…WVAERVELLL (259 aa). Y22 is modified (phosphotyrosine). S27 carries the phosphoserine modification. K36 carries the N6-acetyllysine modification. S107 bears the Phosphoserine mark. At T238 the chain carries Phosphothreonine. K247 is subject to N6-acetyllysine. The segment at 261-266 is linker; it reads KSESQC. The AIR carboxylase domain stretch occupies residues 267-425; it reads RVVVLMGSTS…ADKKIRECNL (159 aa). Residue S274 is modified to Phosphoserine. S332 is a CO2 binding site.

This sequence in the N-terminal section; belongs to the SAICAR synthetase family. The protein in the C-terminal section; belongs to the AIR carboxylase family. Class II subfamily. In terms of assembly, homooctamer.

It catalyses the reaction 5-amino-1-(5-phospho-D-ribosyl)imidazole-4-carboxylate + L-aspartate + ATP = (2S)-2-[5-amino-1-(5-phospho-beta-D-ribosyl)imidazole-4-carboxamido]succinate + ADP + phosphate + 2 H(+). The enzyme catalyses 5-amino-1-(5-phospho-D-ribosyl)imidazole-4-carboxylate + H(+) = 5-amino-1-(5-phospho-beta-D-ribosyl)imidazole + CO2. The protein operates within purine metabolism; IMP biosynthesis via de novo pathway; 5-amino-1-(5-phospho-D-ribosyl)imidazole-4-carboxamide from 5-amino-1-(5-phospho-D-ribosyl)imidazole-4-carboxylate: step 1/2. It participates in purine metabolism; IMP biosynthesis via de novo pathway; 5-amino-1-(5-phospho-D-ribosyl)imidazole-4-carboxylate from 5-amino-1-(5-phospho-D-ribosyl)imidazole (carboxylase route): step 1/1. Functionally, bifunctional phosphoribosylaminoimidazole carboxylase and phosphoribosylaminoimidazole succinocarboxamide synthetase catalyzing two reactions of the de novo purine biosynthetic pathway. The sequence is that of Bifunctional phosphoribosylaminoimidazole carboxylase/phosphoribosylaminoimidazole succinocarboxamide synthetase from Homo sapiens (Human).